The following is a 240-amino-acid chain: tRNA (guanine-N(1)-)-methyltransferase (240 aa).

S-adenosyl-L-methionine-binding positions include Gly-108 and 127-132 (LGDYIL).

Belongs to the RNA methyltransferase TrmD family. In terms of assembly, homodimer.

Its subcellular location is the cytoplasm. It carries out the reaction guanosine(37) in tRNA + S-adenosyl-L-methionine = N(1)-methylguanosine(37) in tRNA + S-adenosyl-L-homocysteine + H(+). Specifically methylates guanosine-37 in various tRNAs. This chain is tRNA (guanine-N(1)-)-methyltransferase, found in Streptococcus sanguinis (strain SK36).